We begin with the raw amino-acid sequence, 195 residues long: Putative 3-methyladenine DNA glycosylase (195 aa).

This sequence belongs to the DNA glycosylase MPG family.

The chain is Putative 3-methyladenine DNA glycosylase from Synechococcus sp. (strain JA-3-3Ab) (Cyanobacteria bacterium Yellowstone A-Prime).